Consider the following 226-residue polypeptide: ATP synthase F(0) complex subunit a (226 aa).

6 helical membrane passes run 13–33 (VILG…LISW), 69–89 (WALL…LGLL), 97–117 (TQLS…VIMA), 138–158 (IPVL…ALGV), 179–199 (FVLL…LFLL), and 201–221 (LLEI…LSLY).

The protein belongs to the ATPase A chain family. In terms of assembly, component of the ATP synthase complex composed at least of ATP5F1A/subunit alpha, ATP5F1B/subunit beta, ATP5MC1/subunit c (homooctomer), MT-ATP6/subunit a, MT-ATP8/subunit 8, ATP5ME/subunit e, ATP5MF/subunit f, ATP5MG/subunit g, ATP5MK/subunit k, ATP5MJ/subunit j, ATP5F1C/subunit gamma, ATP5F1D/subunit delta, ATP5F1E/subunit epsilon, ATP5PF/subunit F6, ATP5PB/subunit b, ATP5PD/subunit d, ATP5PO/subunit OSCP. ATP synthase complex consists of a soluble F(1) head domain (subunits alpha(3) and beta(3)) - the catalytic core - and a membrane F(0) domain - the membrane proton channel (subunits c, a, 8, e, f, g, k and j). These two domains are linked by a central stalk (subunits gamma, delta, and epsilon) rotating inside the F1 region and a stationary peripheral stalk (subunits F6, b, d, and OSCP). Interacts with DNAJC30; interaction is direct.

It localises to the mitochondrion inner membrane. The enzyme catalyses H(+)(in) = H(+)(out). Its function is as follows. Subunit a, of the mitochondrial membrane ATP synthase complex (F(1)F(0) ATP synthase or Complex V) that produces ATP from ADP in the presence of a proton gradient across the membrane which is generated by electron transport complexes of the respiratory chain. ATP synthase complex consist of a soluble F(1) head domain - the catalytic core - and a membrane F(1) domain - the membrane proton channel. These two domains are linked by a central stalk rotating inside the F(1) region and a stationary peripheral stalk. During catalysis, ATP synthesis in the catalytic domain of F(1) is coupled via a rotary mechanism of the central stalk subunits to proton translocation. With the subunit c (ATP5MC1), forms the proton-conducting channel in the F(0) domain, that contains two crucial half-channels (inlet and outlet) that facilitate proton movement from the mitochondrial intermembrane space (IMS) into the matrix. Protons are taken up via the inlet half-channel and released through the outlet half-channel, following a Grotthuss mechanism. This is ATP synthase F(0) complex subunit a from Xenopus laevis (African clawed frog).